The sequence spans 138 residues: Large ribosomal subunit protein uL16 (138 aa).

Basic residues predominate over residues 1-13 (MLQPSRRKYRKEQ). Residues 1-24 (MLQPSRRKYRKEQKGRNTGLASRG) form a disordered region.

Belongs to the universal ribosomal protein uL16 family. In terms of assembly, part of the 50S ribosomal subunit.

Functionally, binds 23S rRNA and is also seen to make contacts with the A and possibly P site tRNAs. The sequence is that of Large ribosomal subunit protein uL16 from Bordetella bronchiseptica (strain ATCC BAA-588 / NCTC 13252 / RB50) (Alcaligenes bronchisepticus).